Here is a 244-residue protein sequence, read N- to C-terminus: tRNA pseudouridine synthase A (244 aa).

Residue Asp52 is the Nucleophile of the active site. Tyr110 is a substrate binding site.

This sequence belongs to the tRNA pseudouridine synthase TruA family. In terms of assembly, homodimer.

The enzyme catalyses uridine(38/39/40) in tRNA = pseudouridine(38/39/40) in tRNA. Its function is as follows. Formation of pseudouridine at positions 38, 39 and 40 in the anticodon stem and loop of transfer RNAs. The sequence is that of tRNA pseudouridine synthase A from Thermoanaerobacter pseudethanolicus (strain ATCC 33223 / 39E) (Clostridium thermohydrosulfuricum).